The chain runs to 765 residues: FHF complex subunit HOOK interacting protein 2A (765 aa).

Disordered stretches follow at residues 193–236 (TLKG…DHLS) and 532–561 (TDIS…KNDG). Polar residues-rich tracts occupy residues 196 to 208 (GQDS…GQSR) and 535 to 550 (SPEN…SSSP).

This sequence belongs to the FHIP family. Expressed in all tissues tested, highly expressed brain. In terms of tissue distribution, only detected at high levels in testis.

Functionally, required for proper functioning of the nervous system. The chain is FHF complex subunit HOOK interacting protein 2A from Homo sapiens (Human).